A 216-amino-acid chain; its full sequence is Protein-methionine-sulfoxide reductase heme-binding subunit MsrQ (216 aa).

Transmembrane regions (helical) follow at residues 16–36 (IWAL…LGAT), 48–68 (EHLL…ITPI), 82–102 (ALGL…MVLD), 119–139 (FITI…TSNI), and 155–175 (LVYV…KVVG).

The protein belongs to the MsrQ family. As to quaternary structure, heterodimer of a catalytic subunit (MsrP) and a heme-binding subunit (MsrQ). FMN serves as cofactor. Heme b is required as a cofactor.

It localises to the cell inner membrane. Functionally, part of the MsrPQ system that repairs oxidized periplasmic proteins containing methionine sulfoxide residues (Met-O), using respiratory chain electrons. Thus protects these proteins from oxidative-stress damage caused by reactive species of oxygen and chlorine generated by the host defense mechanisms. MsrPQ is essential for the maintenance of envelope integrity under bleach stress, rescuing a wide series of structurally unrelated periplasmic proteins from methionine oxidation. MsrQ provides electrons for reduction to the reductase catalytic subunit MsrP, using the quinone pool of the respiratory chain. The chain is Protein-methionine-sulfoxide reductase heme-binding subunit MsrQ from Rhizobium meliloti (strain 1021) (Ensifer meliloti).